We begin with the raw amino-acid sequence, 142 residues long: Domesticated amidase effector 2 (142 aa).

A signal peptide spans 1 to 35; sequence MKLFLISAALVVLGLAAVADAIGCSDPSPFQGRWV. Residues Cys43 and His94 contribute to the active site.

The protein belongs to the cell wall amidase Dae2/Tae2-like family. May be post-translationally modified, since the saliva wild-type protein is slightly heavier than the recombinant one. As to expression, detected in salivary glands and in the gut (at protein level).

It is found in the secreted. In terms of biological role, tick gut and saliva antibacterial peptide that directly antagonizes host skin commensals which enter the ticks during feeding. Acts as a cell wall hydrolase that cleaves the bond between gamma-D-glutamate-meso-diaminopimelate of a peptide stem and D-alanine of another peptide stem in peptidoglycans. In vitro, degrades peptidoglycans from both Gram-negative and Gram-positive bacteria. Is not able to traverse the protective outer membrane of Gram-negative bacteria. Is not able to kill Borrelia burgdorferi, one of the Lyme disease-causing bacteria. This is Domesticated amidase effector 2 from Ixodes scapularis (Black-legged tick).